The following is a 271-amino-acid chain: Ribosomal RNA small subunit methyltransferase J (271 aa).

S-adenosyl-L-methionine-binding positions include 116–117 (RD), 132–133 (ER), 168–169 (SS), and aspartate 190.

Belongs to the methyltransferase superfamily. RsmJ family.

It is found in the cytoplasm. The enzyme catalyses guanosine(1516) in 16S rRNA + S-adenosyl-L-methionine = N(2)-methylguanosine(1516) in 16S rRNA + S-adenosyl-L-homocysteine + H(+). Functionally, specifically methylates the guanosine in position 1516 of 16S rRNA. The sequence is that of Ribosomal RNA small subunit methyltransferase J from Shewanella piezotolerans (strain WP3 / JCM 13877).